The sequence spans 163 residues: uncharacterized protein (163 aa).

The disordered stretch occupies residues 142 to 163 (PQIVISEHNNTKETSPSRQFEH). Over residues 153–163 (KETSPSRQFEH) the composition is skewed to polar residues.

This sequence belongs to the RCAN family.

Functionally, inhibits calcineurin-dependent transcriptional responses by binding to the catalytic domain of calcineurin. This is an uncharacterized protein from Schizosaccharomyces pombe (strain 972 / ATCC 24843) (Fission yeast).